A 476-amino-acid chain; its full sequence is WD repeat, SAM and U-box domain-containing protein 1 (476 aa).

7 WD repeats span residues aspartate 10 to tyrosine 47, glycine 52 to valine 91, proline 95 to serine 134, valine 137 to glutamate 176, alanine 178 to glycine 227, glycine 237 to threonine 276, and glutamine 279 to glycine 318. The region spanning tryptophan 333–lysine 396 is the SAM domain. In terms of domain architecture, U-box spans alanine 403–lysine 476.

The protein is WD repeat, SAM and U-box domain-containing protein 1 (WDSUB1) of Gallus gallus (Chicken).